Reading from the N-terminus, the 98-residue chain is NADH-ubiquinone oxidoreductase chain 4L (98 aa).

3 consecutive transmembrane segments (helical) span residues 1 to 21 (MSLA…GLLM), 25 to 45 (HLMS…VMAT), and 59 to 81 (MPII…LVMV).

This sequence belongs to the complex I subunit 4L family. As to quaternary structure, core subunit of respiratory chain NADH dehydrogenase (Complex I) which is composed of 45 different subunits.

It is found in the mitochondrion inner membrane. The catalysed reaction is a ubiquinone + NADH + 5 H(+)(in) = a ubiquinol + NAD(+) + 4 H(+)(out). In terms of biological role, core subunit of the mitochondrial membrane respiratory chain NADH dehydrogenase (Complex I) which catalyzes electron transfer from NADH through the respiratory chain, using ubiquinone as an electron acceptor. Part of the enzyme membrane arm which is embedded in the lipid bilayer and involved in proton translocation. This chain is NADH-ubiquinone oxidoreductase chain 4L (MT-ND4L), found in Equus asinus (Donkey).